The following is a 479-amino-acid chain: Ribosomal RNA small subunit methyltransferase F (479 aa).

Residues 125-131 (AAAPGSK), E149, D176, and D194 contribute to the S-adenosyl-L-methionine site. C247 functions as the Nucleophile in the catalytic mechanism.

The protein belongs to the class I-like SAM-binding methyltransferase superfamily. RsmB/NOP family.

The protein localises to the cytoplasm. The catalysed reaction is cytidine(1407) in 16S rRNA + S-adenosyl-L-methionine = 5-methylcytidine(1407) in 16S rRNA + S-adenosyl-L-homocysteine + H(+). Its function is as follows. Specifically methylates the cytosine at position 1407 (m5C1407) of 16S rRNA. This is Ribosomal RNA small subunit methyltransferase F from Salmonella enteritidis PT4 (strain P125109).